Reading from the N-terminus, the 134-residue chain is Small ribosomal subunit protein uS11 (134 aa).

Belongs to the universal ribosomal protein uS11 family. In terms of assembly, part of the 30S ribosomal subunit. Interacts with proteins S7 and S18. Binds to IF-3.

Functionally, located on the platform of the 30S subunit, it bridges several disparate RNA helices of the 16S rRNA. Forms part of the Shine-Dalgarno cleft in the 70S ribosome. This is Small ribosomal subunit protein uS11 from Acidovorax ebreus (strain TPSY) (Diaphorobacter sp. (strain TPSY)).